Here is a 1043-residue protein sequence, read N- to C-terminus: Constitutive coactivator of PPAR-gamma-like protein 1 homolog (1043 aa).

Disordered regions lie at residues 353 to 497 and 929 to 1043; these read SMVP…HMQI and YGRG…NKEE. Polar residues-rich tracts occupy residues 362-375 and 405-419; these read QMLN…QSRP and SPIN…NHVD. 2 stretches are compositionally biased toward basic and acidic residues: residues 451-471 and 951-964; these read TWDK…EQAK and EVAK…EDSK. The segment at 801 to 1043 is RNA binding; the sequence is VELATKVEKM…LEGAVANKEE (243 aa). Residues 995–1010 show a composition bias toward low complexity; sequence EARASSNSESALSSDS.

This sequence belongs to the constitutive coactivator of PPAR-gamma family.

It is found in the cytoplasm. The protein localises to the cell membrane. In terms of biological role, may bee involved in the oxidative stress-induced survival signaling. Binds RNA. May participate in mRNA transport in the cytoplasm. In Xenopus tropicalis (Western clawed frog), this protein is Constitutive coactivator of PPAR-gamma-like protein 1 homolog (fam120a).